Consider the following 412-residue polypeptide: Branched-chain alpha-ketoacid dehydrogenase kinase (412 aa).

The transit peptide at 1-30 directs the protein to the mitochondrion; it reads MILASVLGSGPRGGPPLRPLLGPALSLRAR. Phosphoserine is present on Ser-31. Position 52 is a phosphoserine; by autocatalysis (Ser-52). Residues 159-404 form the Histidine kinase domain; sequence LDDHKDVVTL…DVYLRLRHID (246 aa). N6-acetyllysine occurs at positions 192 and 233. ATP contacts are provided by Asn-279 and Asp-315. Asn-279 is a binding site for Mg(2+). K(+)-binding residues include Val-328, Asp-330, and Phe-333. Thr-334 and Thr-335 together coordinate ATP. Phosphoserine occurs at positions 356 and 360. The ATP site is built by His-364, Gly-367, and Leu-370. Gly-367 lines the K(+) pocket.

This sequence belongs to the PDK/BCKDK protein kinase family. Homodimer. Homotetramer. Dimerizes through interaction of two opposing nucleotide-binding domains. Interacts with E2 component of the branched-chain alpha-ketoacid dehydrogenase (BCKDH) complex. Competes with BCKDK for binding to the E2 component; this interaction is modulated by branched-chain alpha-keto acids. At steady state, BCKDH holoenzyme contains BCKDK and BCKDHA is phosphorylated. In response to high levels of branched-chain alpha-keto acids, the inhibitory BCKDK is replaced by activating PPM1K leading to BCKDHA dephosphorylation and BCAA degradation. Post-translationally, autophosphorylated.

Its subcellular location is the mitochondrion matrix. The protein resides in the mitochondrion. The catalysed reaction is L-seryl-[3-methyl-2-oxobutanoate dehydrogenase] + ATP = O-phospho-L-seryl-[3-methyl-2-oxobutanoate dehydrogenase] + ADP + H(+). It catalyses the reaction L-seryl-[protein] + ATP = O-phospho-L-seryl-[protein] + ADP + H(+). Serine/threonine-protein kinase component of macronutrients metabolism. Forms a functional kinase and phosphatase pair with PPM1K, serving as a metabolic regulatory node that coordinates branched-chain amino acids (BCAAs) with glucose and lipid metabolism via two distinct phosphoprotein targets: mitochondrial BCKDHA subunit of the branched-chain alpha-ketoacid dehydrogenase (BCKDH) complex and cytosolic ACLY, a lipogenic enzyme of Krebs cycle. Phosphorylates and inactivates mitochondrial BCKDH complex a multisubunit complex consisting of three multimeric components each involved in different steps of BCAA catabolism: E1 composed of BCKDHA and BCKDHB, E2 core composed of DBT monomers, and E3 composed of DLD monomers. Associates with the E2 component of BCKDH complex and phosphorylates BCKDHA on Ser-347, leading to conformational changes that interrupt substrate channeling between E1 and E2 and inactivates the BCKDH complex. Phosphorylates ACLY on Ser-455 in response to changes in cellular carbohydrate abundance such as occurs during fasting to feeding metabolic transition. Refeeding stimulates MLXIPL/ChREBP transcription factor, leading to increased BCKDK to PPM1K expression ratio, phosphorylation and activation of ACLY that ultimately results in the generation of malonyl-CoA and oxaloacetate immediate substrates of de novo lipogenesis and glucogenesis, respectively. Recognizes phosphosites having SxxE/D canonical motif. This is Branched-chain alpha-ketoacid dehydrogenase kinase (BCKDK) from Bos taurus (Bovine).